The following is a 181-amino-acid chain: ATP synthase subunit delta (181 aa).

This sequence belongs to the ATPase delta chain family. F-type ATPases have 2 components, F(1) - the catalytic core - and F(0) - the membrane proton channel. F(1) has five subunits: alpha(3), beta(3), gamma(1), delta(1), epsilon(1). F(0) has three main subunits: a(1), b(2) and c(10-14). The alpha and beta chains form an alternating ring which encloses part of the gamma chain. F(1) is attached to F(0) by a central stalk formed by the gamma and epsilon chains, while a peripheral stalk is formed by the delta and b chains.

It is found in the cell membrane. Its function is as follows. F(1)F(0) ATP synthase produces ATP from ADP in the presence of a proton or sodium gradient. F-type ATPases consist of two structural domains, F(1) containing the extramembraneous catalytic core and F(0) containing the membrane proton channel, linked together by a central stalk and a peripheral stalk. During catalysis, ATP synthesis in the catalytic domain of F(1) is coupled via a rotary mechanism of the central stalk subunits to proton translocation. Functionally, this protein is part of the stalk that links CF(0) to CF(1). It either transmits conformational changes from CF(0) to CF(1) or is implicated in proton conduction. The sequence is that of ATP synthase subunit delta from Clostridioides difficile (strain 630) (Peptoclostridium difficile).